A 557-amino-acid polypeptide reads, in one-letter code: Cytochrome P450 734A2 (557 aa).

A helical transmembrane segment spans residues 13–35 (WATWRVAAVAAAAAVWVTMHVAA). Cysteine 495 serves as a coordination point for heme.

It belongs to the cytochrome P450 family. Heme is required as a cofactor. Expressed in roots, shoot apex, leaf sheaths and leaf blades.

The protein localises to the membrane. Functionally, cytochrome P450 involved in brassinosteroids (BRs) inactivation and regulation of BRs homeostasis. Is a multifunctional and multisubstrate enzyme that controls the endogenous bioactive BR content both by direct inactivation of castasterone (CS) and by decreasing the levels of BR precursors. Catalyzes the oxidation of carbon 22 hydroxylated BR intermediates to produce C26 oxidized metabolites. The sequence is that of Cytochrome P450 734A2 (CYP734A2) from Oryza sativa subsp. japonica (Rice).